The sequence spans 154 residues: Catabolic 3-dehydroquinase (154 aa).

Residue tyrosine 25 is the Proton acceptor of the active site. Substrate-binding residues include asparagine 79, histidine 85, and aspartate 92. The active-site Proton donor is histidine 105. Substrate contacts are provided by residues 106–107 and arginine 116; that span reads IS.

This sequence belongs to the type-II 3-dehydroquinase family. As to quaternary structure, homododecamer. Adopts a ring-like structure, composed of an arrangement of two hexameric rings stacked on top of one another.

It catalyses the reaction 3-dehydroquinate = 3-dehydroshikimate + H2O. It participates in aromatic compound metabolism; 3,4-dihydroxybenzoate biosynthesis; 3,4-dihydroxybenzoate from 3-dehydroquinate: step 1/2. Is involved in the catabolism of quinate. Allows the utilization of quinate as carbon source via the beta-ketoadipate pathway. The sequence is that of Catabolic 3-dehydroquinase from Botryotinia fuckeliana (strain B05.10) (Noble rot fungus).